We begin with the raw amino-acid sequence, 159 residues long: Ribosomal RNA large subunit methyltransferase H (159 aa).

The S-adenosyl-L-methionine site is built by Leu76 and Gly108.

Belongs to the RNA methyltransferase RlmH family. As to quaternary structure, homodimer.

Its subcellular location is the cytoplasm. It catalyses the reaction pseudouridine(1915) in 23S rRNA + S-adenosyl-L-methionine = N(3)-methylpseudouridine(1915) in 23S rRNA + S-adenosyl-L-homocysteine + H(+). Its function is as follows. Specifically methylates the pseudouridine at position 1915 (m3Psi1915) in 23S rRNA. The polypeptide is Ribosomal RNA large subunit methyltransferase H (Natranaerobius thermophilus (strain ATCC BAA-1301 / DSM 18059 / JW/NM-WN-LF)).